A 453-amino-acid polypeptide reads, in one-letter code: Zinc finger and BTB domain-containing protein 44 (453 aa).

Residue Lys-4 forms a Glycyl lysine isopeptide (Lys-Gly) (interchain with G-Cter in SUMO2) linkage. Residues 31–98 (CDITIRVQDK…AYTATLSINT (68 aa)) form the BTB domain. Ser-135 carries the phosphoserine modification. The disordered stretch occupies residues 135 to 157 (SQPEKSLDAGQENSSNCNFTSRD). The segment covering 145–157 (QENSSNCNFTSRD) has biased composition (polar residues). Phosphoserine occurs at positions 159, 161, 165, 191, 194, and 199. The residue at position 200 (Thr-200) is a Phosphothreonine. The interval 241-266 (QPEKAKQAENTRTLELPGPSEAGRRV) is disordered. A Glycyl lysine isopeptide (Lys-Gly) (interchain with G-Cter in SUMO2) cross-link involves residue Lys-290. 2 disordered regions span residues 295–324 (SDEE…PGSE) and 336–366 (SSSI…ADDD). Over residues 304-318 (SQPVSASQSSLSDQQ) the composition is skewed to low complexity. A compositionally biased stretch (polar residues) spans 352–361 (TLQSTSSTNA). 2 consecutive C2H2-type zinc fingers follow at residues 399 to 421 (FQCP…MLIH) and 427 to 449 (FQCD…RLKH).

The protein resides in the nucleus. The sequence is that of Zinc finger and BTB domain-containing protein 44 (Zbtb44) from Mus musculus (Mouse).